We begin with the raw amino-acid sequence, 322 residues long: Triosephosphate isomerase, chloroplastic (322 aa).

A chloroplast-targeting transit peptide spans Met-1–Met-67. Substrate is bound by residues Asn-78 and Lys-80. Catalysis depends on His-162, which acts as the Electrophile. The active-site Proton acceptor is the Glu-232.

The protein belongs to the triosephosphate isomerase family. In terms of assembly, homodimer.

The protein localises to the plastid. It is found in the chloroplast. The catalysed reaction is D-glyceraldehyde 3-phosphate = dihydroxyacetone phosphate. The protein operates within carbohydrate biosynthesis; Calvin cycle. The protein is Triosephosphate isomerase, chloroplastic (TPIP1) of Spinacia oleracea (Spinach).